The chain runs to 395 residues: Ribonuclease D (395 aa).

One can recognise a 3'-5' exonuclease domain in the interval 14-181 (LITKSEDLAA…VYETLRDRLE (168 aa)). Positions 219 to 300 (NRRYLGLLRA…AEARGLPDAD (82 aa)) constitute an HRDC domain.

Belongs to the RNase D family. Requires a divalent metal cation as cofactor.

It localises to the cytoplasm. It carries out the reaction Exonucleolytic cleavage that removes extra residues from the 3'-terminus of tRNA to produce 5'-mononucleotides.. Exonuclease involved in the 3' processing of various precursor tRNAs. Initiates hydrolysis at the 3'-terminus of an RNA molecule and releases 5'-mononucleotides. The sequence is that of Ribonuclease D from Granulibacter bethesdensis (strain ATCC BAA-1260 / CGDNIH1).